We begin with the raw amino-acid sequence, 508 residues long: Lysine--tRNA ligase (508 aa).

The Mg(2+) site is built by E418 and E425.

It belongs to the class-II aminoacyl-tRNA synthetase family. As to quaternary structure, homodimer. Mg(2+) is required as a cofactor.

The protein localises to the cytoplasm. The enzyme catalyses tRNA(Lys) + L-lysine + ATP = L-lysyl-tRNA(Lys) + AMP + diphosphate. This chain is Lysine--tRNA ligase, found in Burkholderia mallei (strain NCTC 10247).